The chain runs to 162 residues: Protein archease (162 aa).

Asp34, Asp161, and Ile162 together coordinate Ca(2+).

This sequence belongs to the archease family. As to quaternary structure, component of the tRNA-splicing ligase complex.

Functionally, component of the tRNA-splicing ligase complex required to facilitate the enzymatic turnover of catalytic subunit RTCB. Together with ddx1, acts by facilitating the guanylylation of RTCB, a key intermediate step in tRNA ligation. This is Protein archease (zbtb8os) from Danio rerio (Zebrafish).